Reading from the N-terminus, the 375-residue chain is MRGAKSVIDLHAIAHNYNVAKQMMLQKNPSGHVLAIVKANAYGHGAVQVARFLLKHCSSIDGFGVSSIEEALELRHGGIYNKIVLLEGFFTEEDELKLIDDYNFSIIIHSEDQVNSFIKYPFNRPVEIWLKLDSGMNRLGFTPSQFMKFYNLLSNNKNVSNIGKITHFAFADMLENPEHTLKQWDIFEKSVAHLPGPLSAGGSAIILGWLNTVCTDWLRAGIMLYGISPFLSKNKDSKTPESVNIKPAMKLVSTIISVKHVDKGQPIGYGGRYVATRDMKLGVVAMGYGDGFPRQVKDGCPVLVNGVKAPIVGRVSMDMLTVDLSDIPDVKPGDEVIFWGTPELTVADIAKYCSDTSPYELVTKLTRRVPLQYTY.

Catalysis depends on Lys38, which acts as the Proton acceptor; specific for D-alanine. Position 38 is an N6-(pyridoxal phosphate)lysine (Lys38). Catalysis depends on Tyr269, which acts as the Proton acceptor; specific for L-alanine.

Belongs to the alanine racemase family. Requires pyridoxal 5'-phosphate as cofactor.

It catalyses the reaction L-alanine = D-alanine. It functions in the pathway amino-acid biosynthesis; D-alanine biosynthesis; D-alanine from L-alanine: step 1/1. The protein is Alanine racemase, catabolic (alr1) of Schizosaccharomyces pombe (strain 972 / ATCC 24843) (Fission yeast).